The following is a 293-amino-acid chain: tRNA pseudouridine synthase B (293 aa).

Asp38 functions as the Nucleophile in the catalytic mechanism.

This sequence belongs to the pseudouridine synthase TruB family. Type 1 subfamily.

It carries out the reaction uridine(55) in tRNA = pseudouridine(55) in tRNA. Its function is as follows. Responsible for synthesis of pseudouridine from uracil-55 in the psi GC loop of transfer RNAs. In Microcystis aeruginosa (strain NIES-843 / IAM M-2473), this protein is tRNA pseudouridine synthase B.